The primary structure comprises 154 residues: Myoglobin (154 aa).

The region spanning 2–148 (GLSDGEWQLV…FRNDMAAKYK (147 aa)) is the Globin domain. Serine 4 carries the phosphoserine modification. Histidine 65 serves as a coordination point for nitrite. Residue histidine 65 coordinates O2. Threonine 68 carries the post-translational modification Phosphothreonine. Histidine 94 is a binding site for heme b.

This sequence belongs to the globin family. Monomeric.

It is found in the cytoplasm. The protein resides in the sarcoplasm. The enzyme catalyses Fe(III)-heme b-[protein] + nitric oxide + H2O = Fe(II)-heme b-[protein] + nitrite + 2 H(+). It catalyses the reaction H2O2 + AH2 = A + 2 H2O. In terms of biological role, monomeric heme protein which primary function is to store oxygen and facilitate its diffusion within muscle tissues. Reversibly binds oxygen through a pentacoordinated heme iron and enables its timely and efficient release as needed during periods of heightened demand. Depending on the oxidative conditions of tissues and cells, and in addition to its ability to bind oxygen, it also has a nitrite reductase activity whereby it regulates the production of bioactive nitric oxide. Under stress conditions, like hypoxia and anoxia, it also protects cells against reactive oxygen species thanks to its pseudoperoxidase activity. The chain is Myoglobin (MB) from Sus scrofa (Pig).